Consider the following 124-residue polypeptide: Probable dihydroneopterin aldolase (124 aa).

Substrate contacts are provided by residues Glu-23, Tyr-56, and 75–76 (IE). The Proton donor/acceptor role is filled by Lys-103.

This sequence belongs to the DHNA family.

The catalysed reaction is 7,8-dihydroneopterin = 6-hydroxymethyl-7,8-dihydropterin + glycolaldehyde. It functions in the pathway cofactor biosynthesis; tetrahydrofolate biosynthesis; 2-amino-4-hydroxy-6-hydroxymethyl-7,8-dihydropteridine diphosphate from 7,8-dihydroneopterin triphosphate: step 3/4. Functionally, catalyzes the conversion of 7,8-dihydroneopterin to 6-hydroxymethyl-7,8-dihydropterin. This chain is Probable dihydroneopterin aldolase (folB), found in Chlamydia trachomatis serovar D (strain ATCC VR-885 / DSM 19411 / UW-3/Cx).